Consider the following 548-residue polypeptide: Probable 2,3-bisphosphoglycerate-independent phosphoglycerate mutase (548 aa).

Residues Asp-20 and Ser-73 each contribute to the Mn(2+) site. Ser-73 serves as the catalytic Phosphoserine intermediate. Residues His-134, 164 to 165 (RD), Arg-200, Arg-207, 279 to 282 (RGDR), and Lys-354 each bind substrate. 5 residues coordinate Mn(2+): Asp-422, His-426, Asp-463, His-464, and His-493.

Belongs to the BPG-independent phosphoglycerate mutase family. As to quaternary structure, monomer. It depends on Mn(2+) as a cofactor.

The catalysed reaction is (2R)-2-phosphoglycerate = (2R)-3-phosphoglycerate. Its pathway is carbohydrate degradation; glycolysis; pyruvate from D-glyceraldehyde 3-phosphate: step 3/5. Catalyzes the interconversion of 2-phosphoglycerate and 3-phosphoglycerate. This is Probable 2,3-bisphosphoglycerate-independent phosphoglycerate mutase (gpmI) from Leptospira interrogans serogroup Icterohaemorrhagiae serovar copenhageni (strain Fiocruz L1-130).